The sequence spans 261 residues: Ubiquinone biosynthesis O-methyltransferase (261 aa).

The disordered stretch occupies residues 1–22; that stretch reads MTMQVDPSANSSAASSAAPGTT. Residues 8-18 are compositionally biased toward low complexity; the sequence is SANSSAASSAA. 4 residues coordinate S-adenosyl-L-methionine: R55, G86, D107, and M149.

It belongs to the methyltransferase superfamily. UbiG/COQ3 family.

The catalysed reaction is a 3-demethylubiquinol + S-adenosyl-L-methionine = a ubiquinol + S-adenosyl-L-homocysteine + H(+). It carries out the reaction a 3-(all-trans-polyprenyl)benzene-1,2-diol + S-adenosyl-L-methionine = a 2-methoxy-6-(all-trans-polyprenyl)phenol + S-adenosyl-L-homocysteine + H(+). Its pathway is cofactor biosynthesis; ubiquinone biosynthesis. Functionally, O-methyltransferase that catalyzes the 2 O-methylation steps in the ubiquinone biosynthetic pathway. The sequence is that of Ubiquinone biosynthesis O-methyltransferase from Nitrobacter winogradskyi (strain ATCC 25391 / DSM 10237 / CIP 104748 / NCIMB 11846 / Nb-255).